The sequence spans 804 residues: Endoplasmin (804 aa).

A signal peptide spans Met1–Ala21. The SRT pseudosubstrate motif signature appears at Ser42–Thr44. Asn62 carries an N-linked (GlcNAc...) asparagine glycan. Ser64 is subject to Phosphoserine. The N-linked (GlcNAc...) asparagine glycan is linked to Asn107. Residues Asn107, Asp149, and Asn162 each coordinate ATP. Lys168 bears the N6-(2-hydroxyisobutyryl)lysine mark. Residue Ser172 is modified to Phosphoserine. Residue Phe199 participates in ATP binding. A glycan (N-linked (GlcNAc...) asparagine) is linked at Asn217. Residues Thr288–Thr323 are disordered. Over residues Val289–Glu317 the composition is skewed to acidic residues. Phosphoserine is present on residues Ser306 and Ser403. N6-succinyllysine is present on Lys404. Asn445 carries N-linked (GlcNAc...) asparagine glycosylation. Position 447 is a phosphoserine (Ser447). At Lys479 the chain carries N6-acetyllysine. N-linked (GlcNAc...) asparagine glycans are attached at residues Asn481 and Asn502. N6-succinyllysine is present on Lys633. The tract at residues Asp750–Leu804 is disordered. Acidic residues predominate over residues Asp757–Gln791. Residue Thr786 is modified to Phosphothreonine. A compositionally biased stretch (basic and acidic residues) spans Glu792–Leu804. The Prevents secretion from ER signature appears at Lys801–Leu804.

Belongs to the heat shock protein 90 family. Homodimer; disulfide-linked. Component of an EIF2 complex at least composed of CELF1/CUGBP1, CALR, CALR3, EIF2S1, EIF2S2, HSP90B1 and HSPA5. Part of a large chaperone multiprotein complex comprising DNAJB11, HSP90B1, HSPA5, HYOU, PDIA2, PDIA4, PDIA6, PPIB, SDF2L1, UGGT1 and very small amounts of ERP29, but not, or at very low levels, CALR nor CANX. Interacts with AIMP1; regulates its retention in the endoplasmic reticulum. Hyperglycosylated form interacts with OS9; promoting its degradation by the endoplasmic reticulum associated degradation (ERAD). Interacts with CNPY3. This interaction is disrupted in the presence of ATP. Interacts with TLR4 and TLR9, but not with TLR3. Interacts with MZB1 in a calcium-dependent manner. Interacts with METTL23. Interacts with IL1B; the interaction facilitates cargo translocation into the ERGIC. Interacts with EIF2AK3. Phosphorylated by CK2. Post-translationally, N-glycosylated cotranslationally at Asn-217 by STT3A-containing OST-A complex: this glycosylation is constitutive. In response to various stress, 5 additional facultative sites (Asn-62, Asn-107, Asn-445, Asn-481 and Asn-502) can be glycosylated post-translationally by STT3B-containing OST-B complex, leading to a hyperglycosylated form that is degraded by the ER-associated degradation (ERAD) pathway. In normal conditions, the OST-A complex together with CCDC134 prevent glycosylation at facultative sites during protein folding, thereby preventing hyperglycosylation. Mechanistically, nascent HSP90B1 is tethered during translation to a specialized CCDC134-containing translocon that forms a microenvironment for its folding, in which STT3A associates with the SRT pseudosubstrate motif, and prevents access to facultative glycosylation sites until folding is completed, rendering its facultative sites inaccessible to the OST-B complex.

It is found in the endoplasmic reticulum lumen. It localises to the sarcoplasmic reticulum lumen. The protein resides in the melanosome. It catalyses the reaction ATP + H2O = ADP + phosphate + H(+). Functionally, ATP-dependent chaperone involved in the processing of proteins in the endoplasmic reticulum, regulating their transport. Together with MESD, acts as a modulator of the Wnt pathway by promoting the folding of LRP6, a coreceptor of the canonical Wnt pathway. When associated with CNPY3, required for proper folding of Toll-like receptors. Promotes folding and trafficking of TLR4 to the cell surface. May participate in the unfolding of cytosolic leaderless cargos (lacking the secretion signal sequence) such as the interleukin 1/IL-1 to facilitate their translocation into the ERGIC (endoplasmic reticulum-Golgi intermediate compartment) and secretion; the translocation process is mediated by the cargo receptor TMED10. The chain is Endoplasmin (HSP90B1) from Macaca fascicularis (Crab-eating macaque).